We begin with the raw amino-acid sequence, 360 residues long: Nicotinate-nucleotide--dimethylbenzimidazole phosphoribosyltransferase (360 aa).

The active-site Proton acceptor is the Glu327.

The protein belongs to the CobT family.

The catalysed reaction is 5,6-dimethylbenzimidazole + nicotinate beta-D-ribonucleotide = alpha-ribazole 5'-phosphate + nicotinate + H(+). It participates in nucleoside biosynthesis; alpha-ribazole biosynthesis; alpha-ribazole from 5,6-dimethylbenzimidazole: step 1/2. Functionally, catalyzes the synthesis of alpha-ribazole-5'-phosphate from nicotinate mononucleotide (NAMN) and 5,6-dimethylbenzimidazole (DMB). The polypeptide is Nicotinate-nucleotide--dimethylbenzimidazole phosphoribosyltransferase (Shewanella baltica (strain OS185)).